A 1375-amino-acid polypeptide reads, in one-letter code: DNA-directed RNA polymerase subunit beta (1375 aa).

Belongs to the RNA polymerase beta chain family. As to quaternary structure, the RNAP catalytic core consists of 2 alpha, 1 beta, 1 beta' and 1 omega subunit. When a sigma factor is associated with the core the holoenzyme is formed, which can initiate transcription.

The catalysed reaction is RNA(n) + a ribonucleoside 5'-triphosphate = RNA(n+1) + diphosphate. In terms of biological role, DNA-dependent RNA polymerase catalyzes the transcription of DNA into RNA using the four ribonucleoside triphosphates as substrates. In Methylibium petroleiphilum (strain ATCC BAA-1232 / LMG 22953 / PM1), this protein is DNA-directed RNA polymerase subunit beta.